We begin with the raw amino-acid sequence, 295 residues long: sn-glycerol-3-phosphate transport system permease protein UgpA (295 aa).

The Cytoplasmic segment spans residues 1–11; it reads MSSFRPVFRSR. The chain crosses the membrane as a helical span at residues 12-32; it reads WLPYLLVAPQLVITVIFFIWP. Over 33 to 80 the chain is Periplasmic; sequence AGEALWYSLQSVDPFGFSSQFVGLENFVALFHDSYYLDAFWTTIKFSA. One can recognise an ABC transmembrane type-1 domain in the interval 76-284; sequence IKFSALVTFS…FLVIILTVVQ (209 aa). The chain crosses the membrane as a helical span at residues 81-101; it reads LVTFSGLLVSLFFAALVDYVV. The Cytoplasmic segment spans residues 102–109; it reads RGSRFYQT. The chain crosses the membrane as a helical span at residues 110–130; it reads LMLLPYAVAPAVAAVLWIFLF. Over 131–157 the chain is Periplasmic; it reads NPGRGLITHFLGEFGYDWNHAQNSGQA. The helical transmembrane segment at 158 to 178 threads the bilayer; that stretch reads MFLVVFASVWKQISYNFLFFF. Residues 179 to 207 are Cytoplasmic-facing; that stretch reads AALQSIPRSLVEAAAIDGAGPIRRFFRLS. The chain crosses the membrane as a helical span at residues 208–228; the sequence is LPLIAPVSFFLLVVNLVYAFF. Topologically, residues 229–262 are periplasmic; it reads DTFPVIDAATAGGPVQATTTLIYKIYREGFTGLD. The helical transmembrane segment at 263-283 threads the bilayer; the sequence is LSASAAQSVVLMFLVIILTVV. The Cytoplasmic portion of the chain corresponds to 284–295; the sequence is QFRYVESKVRYQ.

Belongs to the binding-protein-dependent transport system permease family. UgpAE subfamily. As to quaternary structure, the complex is composed of two ATP-binding proteins (UgpC), two transmembrane proteins (UgpA and UgpE) and a solute-binding protein (UgpB).

The protein localises to the cell inner membrane. Part of the ABC transporter complex UgpBAEC involved in sn-glycerol-3-phosphate (G3P) import. Probably responsible for the translocation of the substrate across the membrane. The chain is sn-glycerol-3-phosphate transport system permease protein UgpA (ugpA) from Salmonella choleraesuis (strain SC-B67).